Reading from the N-terminus, the 450-residue chain is 3-phosphoshikimate 1-carboxyvinyltransferase (450 aa).

3 residues coordinate 3-phosphoshikimate: K23, S24, and R28. Residue K23 coordinates phosphoenolpyruvate. Phosphoenolpyruvate-binding residues include G96 and R124. Residues S167, S168, Q169, S196, E311, and H340 each contribute to the 3-phosphoshikimate site. Q169 is a phosphoenolpyruvate binding site. E311 acts as the Proton acceptor in catalysis. Phosphoenolpyruvate contacts are provided by R344, R385, and K410. Residues G426–G450 form a disordered region.

Belongs to the EPSP synthase family. As to quaternary structure, monomer.

The protein localises to the cytoplasm. The enzyme catalyses 3-phosphoshikimate + phosphoenolpyruvate = 5-O-(1-carboxyvinyl)-3-phosphoshikimate + phosphate. The protein operates within metabolic intermediate biosynthesis; chorismate biosynthesis; chorismate from D-erythrose 4-phosphate and phosphoenolpyruvate: step 6/7. Functionally, catalyzes the transfer of the enolpyruvyl moiety of phosphoenolpyruvate (PEP) to the 5-hydroxyl of shikimate-3-phosphate (S3P) to produce enolpyruvyl shikimate-3-phosphate and inorganic phosphate. The protein is 3-phosphoshikimate 1-carboxyvinyltransferase of Mycobacterium tuberculosis (strain ATCC 25177 / H37Ra).